A 335-amino-acid polypeptide reads, in one-letter code: NAC domain-containing protein 60 (335 aa).

The 143-residue stretch at 14 to 156 (TFPGFKFSPT…ALVICRLRRN (143 aa)) folds into the NAC domain. A DNA-binding region spans residues 112–162 (IGTKRTLVFHIGRAPKGGRTEWLMHEYCMIGVSLDALVICRLRRNTEFQGS). The helical transmembrane segment at 315-335 (ARWDVVVWLLVMIAVLVFYLV) threads the bilayer.

As to expression, expressed in roots, rosette leaves, cauline leaves, shoot apex, stems and flowers.

Its subcellular location is the membrane. The protein resides in the nucleus. In terms of biological role, transcriptional activator activated by proteolytic cleavage through regulated intramembrane proteolysis (RIP). Transcription factor involved in modulation of abscisic acid (ABA) signaling. Attenuates ABA sensitivity and glucose-induced ABA accumulation. Reduces the expression of ABI4 gene. This is NAC domain-containing protein 60 from Arabidopsis thaliana (Mouse-ear cress).